The chain runs to 82 residues: Small ribosomal subunit protein bS16 (82 aa).

It belongs to the bacterial ribosomal protein bS16 family.

This Bdellovibrio bacteriovorus (strain ATCC 15356 / DSM 50701 / NCIMB 9529 / HD100) protein is Small ribosomal subunit protein bS16.